The primary structure comprises 401 residues: Nuclear rim protein 1 (401 aa).

Helical transmembrane passes span 146–166 (LLLFLMILILSTNAYISWTFI) and 256–274 (FLTSLFCSFSPTCLVFLIL).

This sequence belongs to the NUR1 family.

The protein resides in the nucleus membrane. Functionally, member of a perinuclear network that controls recombination at multiple loci to maintain genome stability. Required for rDNA repeat stability. This chain is Nuclear rim protein 1 (NUR1), found in Vanderwaltozyma polyspora (strain ATCC 22028 / DSM 70294 / BCRC 21397 / CBS 2163 / NBRC 10782 / NRRL Y-8283 / UCD 57-17) (Kluyveromyces polysporus).